Consider the following 413-residue polypeptide: Multifunctional CCA protein (413 aa).

ATP contacts are provided by Gly8 and Arg11. Positions 8 and 11 each coordinate CTP. Mg(2+) is bound by residues Asp21 and Asp23. ATP contacts are provided by Arg91, Arg137, and Arg140. CTP contacts are provided by Arg91, Arg137, and Arg140. The 102-residue stretch at 228–329 folds into the HD domain; it reads TGVHTLMTLS…VKLFDAIDAW (102 aa).

Belongs to the tRNA nucleotidyltransferase/poly(A) polymerase family. Bacterial CCA-adding enzyme type 1 subfamily. Monomer. Can also form homodimers and oligomers. It depends on Mg(2+) as a cofactor. The cofactor is Ni(2+).

It catalyses the reaction a tRNA precursor + 2 CTP + ATP = a tRNA with a 3' CCA end + 3 diphosphate. It carries out the reaction a tRNA with a 3' CCA end + 2 CTP + ATP = a tRNA with a 3' CCACCA end + 3 diphosphate. In terms of biological role, catalyzes the addition and repair of the essential 3'-terminal CCA sequence in tRNAs without using a nucleic acid template. Adds these three nucleotides in the order of C, C, and A to the tRNA nucleotide-73, using CTP and ATP as substrates and producing inorganic pyrophosphate. tRNA 3'-terminal CCA addition is required both for tRNA processing and repair. Also involved in tRNA surveillance by mediating tandem CCA addition to generate a CCACCA at the 3' terminus of unstable tRNAs. While stable tRNAs receive only 3'-terminal CCA, unstable tRNAs are marked with CCACCA and rapidly degraded. The sequence is that of Multifunctional CCA protein from Salmonella typhimurium (strain LT2 / SGSC1412 / ATCC 700720).